Consider the following 203-residue polypeptide: Ras-related protein Rab5A (203 aa).

Residue 18-26 (GDVGTGKSS) participates in GTP binding. The Effector region motif lies at 40 to 48 (QESTIGAAF). GTP-binding positions include 66-70 (DTAGQ), 124-127 (NKAD), and 154-155 (SA). S-geranylgeranyl cysteine attachment occurs at residues C201 and C202.

It belongs to the small GTPase superfamily. Rab family. Interacts with VPS9A. Interacts with NSF and RBP-L. Highly expressed in roots. Expressed at low levels in shoots, flowers and grains.

It localises to the prevacuolar compartment membrane. The protein localises to the golgi apparatus membrane. Its subcellular location is the cell membrane. The protein resides in the protein storage vacuole membrane. Plays an important role in intracellular trafficking of seed storage proteins to the protein storage vacuoles (PSVs). Participates in the transport of the proglutelins from the Golgi apparatus to the PSVs in endosperm. Functions cooperatively with VPS9A to regulate post-Golgi dense vesicle-mediated transport of storage proteins to the type II protein bodies (PBII) protein storage vacuoles in developing endosperm. Involved in the maintenance of the general structural organization of the endomembrane system in developing endosperm. Binds GTP in vitro. Forms a quaternary complex with the two glutelin zipcode RNA-binding proteins RBP-L and RBP-P, and the membrane trafficking factor NSF. This quaternay complex carries glutelin mRNAs for active transport on endosomes to the cortical endoplasmic reticulum membrane, and enables endosome-mediated glutelin mRNA transport in endosperm cells. This is Ras-related protein Rab5A from Oryza sativa subsp. japonica (Rice).